A 246-amino-acid polypeptide reads, in one-letter code: DNA repair protein RecO (246 aa).

Belongs to the RecO family.

Its function is as follows. Involved in DNA repair and RecF pathway recombination. In Cutibacterium acnes (strain DSM 16379 / KPA171202) (Propionibacterium acnes), this protein is DNA repair protein RecO.